Here is an 84-residue protein sequence, read N- to C-terminus: Cysteine-rich protamine (84 aa).

Intrachain disulfides connect Cys16–Cys24 and Cys64–Cys80.

Cross-linked by interchain disulfide bonds around the DNA-helix. In terms of tissue distribution, testis.

The protein localises to the nucleus. It localises to the chromosome. Functionally, protamines substitute for histones in the chromatin of sperm during the haploid phase of spermatogenesis. They compact sperm DNA into a highly condensed, stable and inactive complex. This protamine condenses spermiogenic chromatin in a pattern which comprises fibers with a progressively larger diameter and lamellae that finally undergo definitive coalescence. The protein is Cysteine-rich protamine of Eledone cirrhosa (Curled octopus).